The primary structure comprises 326 residues: Palmitoyltransferase SWF1 (326 aa).

Position 1 (Met1) is a topological domain, lumenal. A helical membrane pass occupies residues 2 to 22; sequence MGALCALAVTQAGLILAAPAL. At 23–49 the chain is on the cytoplasmic side; the sequence is RAYWPFSWYYHVVFRTVLQDTQRHRWK. Residues 50 to 70 form a helical membrane-spanning segment; it reads YWATPAFYAGVYAYCVWLFYG. Residues 71 to 85 are Lumenal-facing; sequence EVYAEIAKALWVPER. The helical transmembrane segment at 86–106 threads the bilayer; that stretch reads WVLPAAVVAPAAAGVAAAATP. Residues 107-164 are Cytoplasmic-facing; sequence AAVPADAAYDGLLFHDGVECRTCRVRKPARSRHCGVCGRCVPLADHHCVWLNNCVGRG. The 51-residue stretch at 124 to 174 folds into the DHHC domain; sequence VECRTCRVRKPARSRHCGVCGRCVPLADHHCVWLNNCVGRGNYGLFYLALG. A helical transmembrane segment spans residues 165–185; it reads NYGLFYLALGAHCALLTYGAV. Residues 186–198 lie on the Lumenal side of the membrane; that stretch reads RLPLAAPAGRWPR. The chain crosses the membrane as a helical span at residues 199–219; sequence ALLALELLVASFAVLCVWFTA. The Cytoplasmic segment spans residues 220 to 326; that stretch reads TQVALVRDGM…RIFRRRVRGL (107 aa).

Belongs to the DHHC palmitoyltransferase family. SWF1 subfamily.

The protein localises to the endoplasmic reticulum membrane. The catalysed reaction is L-cysteinyl-[protein] + hexadecanoyl-CoA = S-hexadecanoyl-L-cysteinyl-[protein] + CoA. Its function is as follows. Palmitoyltransferase that targets several endosomal SNAREs. Palmitoylates the SNAREs at cysteine residues close to the cytoplasmic end of their transmembrane domain. May have a role in the cellular quality control of transmembrane domain-containing proteins. In Eremothecium gossypii (strain ATCC 10895 / CBS 109.51 / FGSC 9923 / NRRL Y-1056) (Yeast), this protein is Palmitoyltransferase SWF1 (SWF1).